We begin with the raw amino-acid sequence, 444 residues long: Phosphatidate cytidylyltransferase 2 (444 aa).

Over residues 1 to 38 the composition is skewed to basic and acidic residues; the sequence is MTELRQRVVREDAPPEDKESESEAKLDGETASDSESRA. Positions 1–48 are disordered; it reads MTELRQRVVREDAPPEDKESESEAKLDGETASDSESRAETAPLPTSVD. Ser-20 carries the phosphoserine modification. At Thr-30 the chain carries Phosphothreonine. Phosphoserine occurs at positions 32, 34, and 36. Phosphothreonine is present on Thr-50. Transmembrane regions (helical) follow at residues 78-98, 129-149, 165-185, 212-232, 261-281, and 339-359; these read MIAFFFIIIYLGPMVLMMIVM, WYFLLCVNYFFYGETVTDYFF, HRFISFALYLTGFCMFVLSLV, LVIHNLFEGMIWFIVPISCVI, GFIGGFFATVVFGLLLSYVMS, and IALSTFASLIGPFGGFFASGF.

The protein belongs to the CDS family. Homodimer. As to expression, ubiquitous. Expressed in the ganglion cell layer and inner nuclear layer of the retina.

The protein resides in the endoplasmic reticulum membrane. It carries out the reaction a 1,2-diacyl-sn-glycero-3-phosphate + CTP + H(+) = a CDP-1,2-diacyl-sn-glycerol + diphosphate. It catalyses the reaction 1-octadecanoyl-2-(5Z,8Z,11Z,14Z-eicosatetraenoyl)-sn-glycero-3-phosphate + CTP + H(+) = 1-octadecanoyl-2-(5Z,8Z,11Z,14Z-eicosatetraenoyl)-sn-glycero-3-cytidine-5'-diphosphate + diphosphate. The enzyme catalyses 1-octadecanoyl-2-(9Z,12Z-octadecadienoyl)-sn-glycero-3-phosphate + CTP + H(+) = 1-octadecanoyl-2-(9Z,12Z-octadecadienoyl)-sn-glycero-3-cytidine-5'-diphosphate + diphosphate. The catalysed reaction is 1-hexadecanoyl-2-(5Z,8Z,11Z,14Z-eicosatetraenoyl)-sn-glycero-3-phosphate + CTP + H(+) = 1-hexadecanoyl-2-(5Z,8Z,11Z,14Z-eicosatetraenoyl)-sn-glycero-3-cytidine-5'-diphosphate + diphosphate. It carries out the reaction 1,2-di-(5Z,8Z,11Z,14Z)-eicosatetraenoyl-sn-glycero-3-phosphate + CTP + H(+) = 1,2-di-(5Z,8Z,11Z,14Z-eicosatetraenoyl)-sn-glycero-3-cytidine-5'-diphosphate + diphosphate. It catalyses the reaction 1-octadecanoyl-2-(9Z-octadecenoyl)-sn-glycero-3-phosphate + CTP + H(+) = 1-octadecanoyl-2-(9Z-octadecenoyl)-sn-glycero-3-cytidine-5'-diphosphate + diphosphate. The enzyme catalyses 1-octadecanoyl-2-(4Z,7Z,10Z,13Z,16Z,19Z-docosahexaenoyl)-sn-glycero-3-phosphate + CTP + H(+) = 1-octadecanoyl-2-(4Z,7Z,10Z,13Z,16Z,19Z-docosahexaenoyl)-sn-glycero-3-cytidine-5'-diphosphate + diphosphate. The catalysed reaction is 1,2-di-(9Z,12Z-octadecadienoyl)-sn-glycero-3-phosphate + CTP + H(+) = 1,2-di-(9Z,12Z-octadecadienoyl)-sn-glycero-3-cytidine-5'-diphosphate + diphosphate. It carries out the reaction 1,2-di-(9Z-octadecenoyl)-sn-glycero-3-phosphate + CTP + H(+) = 1,2-di-(9Z-octadecenoyl)-sn-glycero-3-cytidine-5'-diphosphate + diphosphate. Its pathway is phospholipid metabolism; CDP-diacylglycerol biosynthesis; CDP-diacylglycerol from sn-glycerol 3-phosphate: step 3/3. Its function is as follows. Catalyzes the conversion of phosphatidic acid (PA) to CDP-diacylglycerol (CDP-DAG), an essential intermediate in the synthesis of phosphatidylglycerol, cardiolipin and phosphatidylinositol. Exhibits specificity for the nature of the acyl chains at the sn-1 and sn-2 positions in the substrate, PA and the preferred acyl chain composition is 1-stearoyl-2-arachidonoyl-sn-phosphatidic acid. Plays an important role in regulating the growth and maturation of lipid droplets which are storage organelles at the center of lipid and energy homeostasis. This Mus musculus (Mouse) protein is Phosphatidate cytidylyltransferase 2.